Consider the following 101-residue polypeptide: Large ribosomal subunit protein eL21 (101 aa).

Residues 1–18 (MVKHSKGYRTRSRSLLRK) are compositionally biased toward basic residues. The segment at 1 to 24 (MVKHSKGYRTRSRSLLRKSPRERG) is disordered.

This sequence belongs to the eukaryotic ribosomal protein eL21 family.

This Saccharolobus solfataricus (strain ATCC 35092 / DSM 1617 / JCM 11322 / P2) (Sulfolobus solfataricus) protein is Large ribosomal subunit protein eL21 (rpl21e).